The sequence spans 349 residues: Small ribosomal subunit protein uS2 (349 aa).

The protein belongs to the universal ribosomal protein uS2 family.

The chain is Small ribosomal subunit protein uS2 from Methylocella silvestris (strain DSM 15510 / CIP 108128 / LMG 27833 / NCIMB 13906 / BL2).